Here is a 736-residue protein sequence, read N- to C-terminus: Microtubule-associated protein mu-2 (736 aa).

This sequence belongs to the orthoreovirus mu-2 protein family. In terms of assembly, interacts with protein mu-NS; in viral inclusions. Interacts with polymerase lambda-3; this interaction stimulates the ATPase activity of mu-2. A divalent metal cation serves as cofactor.

It is found in the virion. The protein localises to the host cytoplasm. It localises to the host cytoskeleton. In terms of biological role, minor inner capsid (core) component. Displays NTPase and RNA 5'-triphosphatase (RTPase) activities. ATP is the preferred substrate for hydrolysis. May function as a cofactor of polymerase lambda-3. Associates with microtubules and plays a role in the formation, structural organization and morphology of viral inclusions, where the assembly of cores and the replication of viral RNA occur. Together with mu-NS, recruits the other core proteins to these inclusions. The protein is Microtubule-associated protein mu-2 (M1) of Mammalia (T1L).